A 434-amino-acid chain; its full sequence is MNQTVNVIGAGLAGSEAAWQLAKRGINVRLYEMRPVKQTPAHHTDKFAELVCSNSLRANSLTNAVGVLKEEMRVLDSAIIAAADECSVPAGGALAVDRHEFAANVTEKVKNHPNVTVLHEEVTEIPEGPTIIATGPLTSEALSAKLRELTGEDYLYFYDAAAPIVEKDSLDMDKVYLKSRYDKGEAAYLNCPMTEEEFDRFYDALVSAETVPLKEFEKEIFFEGCMPIEVMAKRGKKTMLFGPMKPVGLEDPKTGKRPYAVVQLRQDDAAGTLYNIVGFQTHLKWGDQKEVLRLIPGLEQAEIVRYGVMHRNTFINSPSLLKATYQFKKRDDLFFAGQMTGVEGYVESAASGLVAGINAARLIQGKEPVTFSNETAIGSMAHYITETNKKNFQPMNANFGLFKELGVKIKNKQERNEQYASRALETIRNISKTL.

Position 9-14 (9-14 (GAGLAG)) interacts with FAD.

It belongs to the MnmG family. TrmFO subfamily. It depends on FAD as a cofactor.

It is found in the cytoplasm. The catalysed reaction is uridine(54) in tRNA + (6R)-5,10-methylene-5,6,7,8-tetrahydrofolate + NADH + H(+) = 5-methyluridine(54) in tRNA + (6S)-5,6,7,8-tetrahydrofolate + NAD(+). The enzyme catalyses uridine(54) in tRNA + (6R)-5,10-methylene-5,6,7,8-tetrahydrofolate + NADPH + H(+) = 5-methyluridine(54) in tRNA + (6S)-5,6,7,8-tetrahydrofolate + NADP(+). In terms of biological role, catalyzes the folate-dependent formation of 5-methyl-uridine at position 54 (M-5-U54) in all tRNAs. This chain is Methylenetetrahydrofolate--tRNA-(uracil-5-)-methyltransferase TrmFO, found in Bacillus licheniformis (strain ATCC 14580 / DSM 13 / JCM 2505 / CCUG 7422 / NBRC 12200 / NCIMB 9375 / NCTC 10341 / NRRL NRS-1264 / Gibson 46).